A 405-amino-acid polypeptide reads, in one-letter code: Imidazolonepropionase (405 aa).

Residues His73 and His75 each coordinate Fe(3+). The Zn(2+) site is built by His73 and His75. The 4-imidazolone-5-propanoate site is built by Arg82, Tyr145, and His178. Position 145 (Tyr145) interacts with N-formimidoyl-L-glutamate. His243 serves as a coordination point for Fe(3+). Residue His243 participates in Zn(2+) binding. Gln246 lines the 4-imidazolone-5-propanoate pocket. Asp318 is a Fe(3+) binding site. Residue Asp318 participates in Zn(2+) binding. N-formimidoyl-L-glutamate-binding residues include Asn320 and Gly322. Position 323 (Thr323) interacts with 4-imidazolone-5-propanoate.

Belongs to the metallo-dependent hydrolases superfamily. HutI family. Requires Zn(2+) as cofactor. Fe(3+) is required as a cofactor.

Its subcellular location is the cytoplasm. It catalyses the reaction 4-imidazolone-5-propanoate + H2O = N-formimidoyl-L-glutamate. It functions in the pathway amino-acid degradation; L-histidine degradation into L-glutamate; N-formimidoyl-L-glutamate from L-histidine: step 3/3. Catalyzes the hydrolytic cleavage of the carbon-nitrogen bond in imidazolone-5-propanoate to yield N-formimidoyl-L-glutamate. It is the third step in the universal histidine degradation pathway. The protein is Imidazolonepropionase of Brucella abortus (strain S19).